A 334-amino-acid polypeptide reads, in one-letter code: Type II methyltransferase M.NlaIII (334 aa).

It belongs to the N(4)/N(6)-methyltransferase family.

The catalysed reaction is a 2'-deoxyadenosine in DNA + S-adenosyl-L-methionine = an N(6)-methyl-2'-deoxyadenosine in DNA + S-adenosyl-L-homocysteine + H(+). In terms of biological role, a methylase, recognizes the double-stranded sequence 5'-CATG-3', methylates A-2 on both strands and protects the DNA from cleavage by the NlaIII endonuclease. In Neisseria lactamica, this protein is Type II methyltransferase M.NlaIII (nlaIIIM).